Consider the following 974-residue polypeptide: UvrABC system protein A (974 aa).

34 to 41 (GLSGSGKS) lines the ATP pocket. ABC transporter domains are found at residues 331–610 (WARS…TNSL) and 630–959 (ISKT…QFLK). ATP is bound at residue 663-670 (GVSGGGKS). A C4-type zinc finger spans residues 762-788 (CEACQGDGVIKIEMHFLPDVYVTCDVC).

Belongs to the ABC transporter superfamily. UvrA family. In terms of assembly, forms a heterotetramer with UvrB during the search for lesions.

The protein resides in the cytoplasm. Functionally, the UvrABC repair system catalyzes the recognition and processing of DNA lesions. UvrA is an ATPase and a DNA-binding protein. A damage recognition complex composed of 2 UvrA and 2 UvrB subunits scans DNA for abnormalities. When the presence of a lesion has been verified by UvrB, the UvrA molecules dissociate. The polypeptide is UvrABC system protein A (Brucella suis biovar 1 (strain 1330)).